We begin with the raw amino-acid sequence, 369 residues long: Velvet complex subunit B (369 aa).

Disordered regions lie at residues 1–54, 138–174, and 346–369; these read MYAV…STVH, SIST…VGQP, and KDGV…DNEY. Pro residues predominate over residues 13–27; the sequence is HPPPLSMDRIPPPST. The region spanning 53–345 is the Velvet domain; it reads VHDGRIWSLQ…ANQGIKIPIR (293 aa).

This sequence belongs to the velvet family. VelB subfamily. Component of the heterotrimeric velvet complex composed of laeA, veA and velB; VeA acting as a bridging protein between laeA and velB. Interacts directly with veA. Forms a heterodimeric complex with vosA; the formation of the velB-vosA complex is light-dependent.

The protein resides in the nucleus. It is found in the cytoplasm. Component of the velvet transcription factor complex that controls sexual/asexual developmental ratio in response to light, promoting sexual development in the darkness while stimulating asexual sporulation under illumination. The velvet complex acts as a global regulator for secondary metabolite gene expression. Component of the velB-VosA heterodimeric complex that plays a dual role in activating genes associated with spore maturation and repressing certain development-associated genes. The velB-VosA complex binds DNA through the DNA-binding domain of vosA that recognizes an 11-nucleotide consensus sequence 5'-CTGGCCGCGGC-3' consisting of two motifs in the promoters of key developmental regulatory genes. The vosA-velB complex binds to the beta-glucan synthase fksA gene promoter in asexual spores for repression. This chain is Velvet complex subunit B, found in Emericella nidulans (strain FGSC A4 / ATCC 38163 / CBS 112.46 / NRRL 194 / M139) (Aspergillus nidulans).